The following is a 435-amino-acid chain: Protein translocase subunit SecY (435 aa).

Helical transmembrane passes span 19–39 (ILFT…TVPG), 68–88 (FSVF…VQLL), 116–136 (YIAL…FDTL), 147–167 (VQTY…VTWL), 179–199 (GVSM…IKGI), 216–236 (FIFV…TTFV), 269–289 (VIPV…FQVV), 311–331 (ISGM…YTFV), 372–392 (VGSL…DVFG), and 395–415 (DAVA…IEGM).

It belongs to the SecY/SEC61-alpha family. Component of the Sec protein translocase complex. Heterotrimer consisting of SecY, SecE and SecG subunits. The heterotrimers can form oligomers, although 1 heterotrimer is thought to be able to translocate proteins. Interacts with the ribosome. Interacts with SecDF, and other proteins may be involved. Interacts with SecA.

It localises to the cell membrane. Functionally, the central subunit of the protein translocation channel SecYEG. Consists of two halves formed by TMs 1-5 and 6-10. These two domains form a lateral gate at the front which open onto the bilayer between TMs 2 and 7, and are clamped together by SecE at the back. The channel is closed by both a pore ring composed of hydrophobic SecY resides and a short helix (helix 2A) on the extracellular side of the membrane which forms a plug. The plug probably moves laterally to allow the channel to open. The ring and the pore may move independently. This is Protein translocase subunit SecY from Streptococcus sanguinis (strain SK36).